Here is a 393-residue protein sequence, read N- to C-terminus: Putative competence-damage inducible protein (393 aa).

Belongs to the CinA family.

This chain is Putative competence-damage inducible protein, found in Streptococcus suis (strain 05ZYH33).